Reading from the N-terminus, the 465-residue chain is Chromosomal replication initiator protein DnaA (465 aa).

Residues M1–G80 are domain I, interacts with DnaA modulators. The interval G80–R127 is domain II. The segment at L128 to A345 is domain III, AAA+ region. ATP is bound by residues G173, G175, K176, and T177. The interval R346–S465 is domain IV, binds dsDNA.

It belongs to the DnaA family. As to quaternary structure, oligomerizes as a right-handed, spiral filament on DNA at oriC.

Its subcellular location is the cytoplasm. In terms of biological role, plays an essential role in the initiation and regulation of chromosomal replication. ATP-DnaA binds to the origin of replication (oriC) to initiate formation of the DNA replication initiation complex once per cell cycle. Binds the DnaA box (a 9 base pair repeat at the origin) and separates the double-stranded (ds)DNA. Forms a right-handed helical filament on oriC DNA; dsDNA binds to the exterior of the filament while single-stranded (ss)DNA is stabiized in the filament's interior. The ATP-DnaA-oriC complex binds and stabilizes one strand of the AT-rich DNA unwinding element (DUE), permitting loading of DNA polymerase. After initiation quickly degrades to an ADP-DnaA complex that is not apt for DNA replication. Binds acidic phospholipids. The protein is Chromosomal replication initiator protein DnaA of Acinetobacter baylyi (strain ATCC 33305 / BD413 / ADP1).